We begin with the raw amino-acid sequence, 475 residues long: Cytosolic enolase 3 (475 aa).

The residue at position 2 (Ser-2) is an N-acetylserine. Residues His-200 and Glu-209 each contribute to the substrate site. The active-site Proton donor is the Asp-252. Asp-287, Glu-336, and Asp-361 together coordinate Mg(2+). Substrate is bound by residues Glu-336 and Asp-361. The active-site Proton acceptor is the Lys-386. Substrate is bound by residues 413 to 416 and Lys-437; that span reads SHRC.

Belongs to the enolase family. Homodimer. Requires Mg(2+) as cofactor.

It is found in the cytoplasm. The protein localises to the nucleus. The catalysed reaction is (2R)-2-phosphoglycerate = phosphoenolpyruvate + H2O. It functions in the pathway carbohydrate degradation; glycolysis; pyruvate from D-glyceraldehyde 3-phosphate: step 4/5. In Arabidopsis thaliana (Mouse-ear cress), this protein is Cytosolic enolase 3 (ENO3).